The primary structure comprises 149 residues: Globin (149 aa).

The Globin domain maps to 2 to 149 (VLTKDEFDSL…KIFTGVAGQL (148 aa)). Position 100 (His-100) interacts with heme.

The protein belongs to the globin family. In terms of assembly, monomer.

Oxygen binding protein. This chain is Globin, found in Isoparorchis hypselobagri (Giant trematode).